The chain runs to 259 residues: Factor V activator (259 aa).

An N-terminal signal peptide occupies residues 1-18 (MVLIRVLANLLVLQLSYA). Positions 19–24 (QKSSEL) are excised as a propeptide. A Peptidase S1 domain is found at 25-251 (VVGGDECDIN…YTDWIQSIIA (227 aa)). Disulfide bonds link Cys31-Cys165, Cys52-Cys68, Cys100-Cys258, Cys144-Cys212, Cys176-Cys191, and Cys202-Cys227. Active-site charge relay system residues include His67 and Asp112. The active-site Charge relay system is Ser206. Residue Asn253 is glycosylated (N-linked (GlcNAc...) asparagine).

This sequence belongs to the peptidase S1 family. Snake venom subfamily. In terms of assembly, monomer. In terms of processing, N-glycosylated. Contains 4.4% of hexoses, 4.4% of hexosamines and 3.1% of sialic acids. Expressed by the venom gland.

The protein resides in the secreted. It carries out the reaction Fully activates human clotting factor V by a single cleavage at the 1545-Trp-Tyr-Leu-Arg-|-Ser-Asn-Asn-Gly-1552 bond. Cattle, but not rabbit, factor V is cleaved, and no other proteins of the clotting system are attacked. Esterase activity is observed on Bz-Arg-OEt and Tos-Arg-OMe, and amidase activity on Phe-pipecolyl-Arg-NHPhNO2.. Its activity is regulated as follows. Inhibited by D-Phe-Pro-Arg-chloromethyl ketone (FPRCK) (98%), PMSF (93%), benzamidine (67%), and diisopropylfluorophosphate (DFP). Is not inhibited by BPTI, antithrombin and EDTA. Venom serine protease that converts factor V (F5) to the active form Va in the presence of calcium ions and phospholipids. It cleaves the Arg(1545)-Ser(1546) linkage in the human factor V molecule. Has hydrolytic activities against BAEE (1.2 U/mg), TAME, and Pro-Phe-Arg-MCA (4.9 U/mg). Shows coagulant activity. This chain is Factor V activator, found in Macrovipera lebetinus (Levantine viper).